The primary structure comprises 625 residues: Glutamine--fructose-6-phosphate aminotransferase [isomerizing] (625 aa).

Cysteine 2 acts as the Nucleophile; for GATase activity in catalysis. Residues 2–229 (CGLVGYVGQR…QDQAVVITAD (228 aa)) form the Glutamine amidotransferase type-2 domain. 2 SIS domains span residues 298–437 (SDQE…ARGT) and 470–615 (LAYR…VDKP). Lysine 620 (for Fru-6P isomerization activity) is an active-site residue.

In terms of assembly, homodimer.

It localises to the cytoplasm. The catalysed reaction is D-fructose 6-phosphate + L-glutamine = D-glucosamine 6-phosphate + L-glutamate. Functionally, catalyzes the first step in hexosamine metabolism, converting fructose-6P into glucosamine-6P using glutamine as a nitrogen source. In Mycobacterium leprae (strain TN), this protein is Glutamine--fructose-6-phosphate aminotransferase [isomerizing].